We begin with the raw amino-acid sequence, 843 residues long: Protein P (843 aa).

The interval 1-177 (MPLSYQHFRK…FCGSPYSWEQ (177 aa)) is terminal protein domain (TP). The interval 178 to 346 (ELQHGRLVFQ…YCLSHIVNLL (169 aa)) is spacer. 2 disordered regions span residues 218-243 (LKQSRLGLQPQQGSLARGKSGRSGSI) and 290-316 (STSKRQSSSGHAVELHNIPPSSARSQS). Positions 290-299 (STSKRQSSSG) are enriched in polar residues. Residues 347 to 690 (EDWGPCTEHG…YLHLYPVARQ (344 aa)) are polymerase/reverse transcriptase domain (RT). A Reverse transcriptase domain is found at 357–600 (EHNIRIPRTP…YSLNFMGYVI (244 aa)). 3 residues coordinate Mg(2+): aspartate 429, aspartate 551, and aspartate 552.

It belongs to the hepadnaviridae P protein family.

It catalyses the reaction DNA(n) + a 2'-deoxyribonucleoside 5'-triphosphate = DNA(n+1) + diphosphate. The enzyme catalyses Endonucleolytic cleavage to 5'-phosphomonoester.. Its activity is regulated as follows. Activated by host HSP70 and HSP40 in vitro to be able to bind the epsilon loop of the pgRNA. Because deletion of the RNase H region renders the protein partly chaperone-independent, the chaperones may be needed indirectly to relieve occlusion of the RNA-binding site by this domain. Inhibited by several reverse-transcriptase inhibitors: Lamivudine, Adefovir and Entecavir. Functionally, multifunctional enzyme that converts the viral RNA genome into dsDNA in viral cytoplasmic capsids. This enzyme displays a DNA polymerase activity that can copy either DNA or RNA templates, and a ribonuclease H (RNase H) activity that cleaves the RNA strand of RNA-DNA heteroduplexes in a partially processive 3'- to 5'-endonucleasic mode. Neo-synthesized pregenomic RNA (pgRNA) are encapsidated together with the P protein, and reverse-transcribed inside the nucleocapsid. Initiation of reverse-transcription occurs first by binding the epsilon loop on the pgRNA genome, and is initiated by protein priming, thereby the 5'-end of (-)DNA is covalently linked to P protein. Partial (+)DNA is synthesized from the (-)DNA template and generates the relaxed circular DNA (RC-DNA) genome. After budding and infection, the RC-DNA migrates in the nucleus, and is converted into a plasmid-like covalently closed circular DNA (cccDNA). The activity of P protein does not seem to be necessary for cccDNA generation, and is presumably released from (+)DNA by host nuclear DNA repair machinery. This chain is Protein P, found in Homo sapiens (Human).